The chain runs to 247 residues: MTRFALTLEFDGTPFMGLQRQKHGPSVQQAVEEAARATLNQDITLHSAGRTDTGVHALGMRSHFDAETDLTPFRLMGGLNAHLRPHPIAVTNCEIMPEDWHARFACIGRSYVYRIINRRAPLTIDRKRAWQVPQQLDHEAMQRAAQLLVGTHDFTTFRSTQCQAKDPVKSLDRLEVERDGDEIRVHAEARSFLHHQVRSMVGCLKLVGQGTWREEEVEEALLARDRQRLGLNAPPHGLYFVAAEYPR.

Catalysis depends on aspartate 52, which acts as the Nucleophile. Position 111 (tyrosine 111) interacts with substrate.

This sequence belongs to the tRNA pseudouridine synthase TruA family. In terms of assembly, homodimer.

The catalysed reaction is uridine(38/39/40) in tRNA = pseudouridine(38/39/40) in tRNA. In terms of biological role, formation of pseudouridine at positions 38, 39 and 40 in the anticodon stem and loop of transfer RNAs. In Erythrobacter litoralis (strain HTCC2594), this protein is tRNA pseudouridine synthase A.